A 521-amino-acid polypeptide reads, in one-letter code: Bifunctional purine biosynthesis protein PurH (521 aa).

The 147-residue stretch at M1–V147 folds into the MGS-like domain.

It belongs to the PurH family.

The catalysed reaction is (6R)-10-formyltetrahydrofolate + 5-amino-1-(5-phospho-beta-D-ribosyl)imidazole-4-carboxamide = 5-formamido-1-(5-phospho-D-ribosyl)imidazole-4-carboxamide + (6S)-5,6,7,8-tetrahydrofolate. It catalyses the reaction IMP + H2O = 5-formamido-1-(5-phospho-D-ribosyl)imidazole-4-carboxamide. It functions in the pathway purine metabolism; IMP biosynthesis via de novo pathway; 5-formamido-1-(5-phospho-D-ribosyl)imidazole-4-carboxamide from 5-amino-1-(5-phospho-D-ribosyl)imidazole-4-carboxamide (10-formyl THF route): step 1/1. Its pathway is purine metabolism; IMP biosynthesis via de novo pathway; IMP from 5-formamido-1-(5-phospho-D-ribosyl)imidazole-4-carboxamide: step 1/1. This Syntrophotalea carbinolica (strain DSM 2380 / NBRC 103641 / GraBd1) (Pelobacter carbinolicus) protein is Bifunctional purine biosynthesis protein PurH.